The following is a 671-amino-acid chain: MTPHSTHVTLDHEGIIQPPAEFKERSKSKPNLADFETYSKMYKESIENPSKFFGEQALEHLSWDRPFDEARYPVSSEQDFADGDIASWFVNGQLNASYNAVDRWAIKNPNKPAIIYEADEENEGRIITYGQLLKDVCKLAQCLTKLGIRKGDSVAVYLPMIPEALVTLLAIVRIGAVHSVVFAGFSSSSLKDRILDASSKIVITTDESKRGGKTIETKKIVDDALKNCPDVTNVLLFKRTGNAHIPFTEGRDLWWHEEMAKYGPYFPPVPVNSEDPLFLLYTSGSTGKPKGIQHSTAGYLLGAAMTSKYTFDVHEDDVLFTAGDVGWITGHTYVVYGPLLCGATTVVFEGTPAHPNYSRYWEIVDKYQVTQFYVAPTALRLLKRAGTKYIENYKLDSLRVLGSVGEPIAAEIWHWYNDNIGRRKCHIVDTYWQTESGSHMLAPLAGITPTKPGSASLPCFGIDAKILDPVSGKELKENDVEGVLCVKSCWPSISRGIYNDYARFIETYLKPYPNHYFSGDGAARDVDGFYWILGRVDDVVNVSGHRLSTAEIEAALILHESVAECAVVGYADELTGQAVAAYVSLKSNVSEDLEVIKKELILTVRKEIGPFATPKTILLVDDLPKTRSGKIMRRILRKVLAGEEDQLGDISTLSNPGVVAQIIDVVKATRK.

CoA contacts are provided by residues 210 to 213 (RGGK) and Thr329. Residues 405-407 (GEP), 429-434 (DTYWQT), Asp520, and Arg535 each bind ATP. Ser543 lines the CoA pocket. Arg546 lines the ATP pocket. Arg605 is a CoA binding site.

It belongs to the ATP-dependent AMP-binding enzyme family.

The enzyme catalyses acetate + ATP + CoA = acetyl-CoA + AMP + diphosphate. The sequence is that of Acetyl-coenzyme A synthetase 1 (ACS1) from Debaryomyces hansenii (strain ATCC 36239 / CBS 767 / BCRC 21394 / JCM 1990 / NBRC 0083 / IGC 2968) (Yeast).